An 886-amino-acid chain; its full sequence is Alanine--tRNA ligase (886 aa).

The Zn(2+) site is built by histidine 564, histidine 568, cysteine 676, and histidine 680.

The protein belongs to the class-II aminoacyl-tRNA synthetase family. The cofactor is Zn(2+).

The protein localises to the cytoplasm. The enzyme catalyses tRNA(Ala) + L-alanine + ATP = L-alanyl-tRNA(Ala) + AMP + diphosphate. Its function is as follows. Catalyzes the attachment of alanine to tRNA(Ala) in a two-step reaction: alanine is first activated by ATP to form Ala-AMP and then transferred to the acceptor end of tRNA(Ala). Also edits incorrectly charged Ser-tRNA(Ala) and Gly-tRNA(Ala) via its editing domain. This is Alanine--tRNA ligase from Bartonella bacilliformis (strain ATCC 35685 / KC583 / Herrer 020/F12,63).